A 119-amino-acid polypeptide reads, in one-letter code: Ribonuclease P protein component (119 aa).

It belongs to the RnpA family. Consists of a catalytic RNA component (M1 or rnpB) and a protein subunit.

It catalyses the reaction Endonucleolytic cleavage of RNA, removing 5'-extranucleotides from tRNA precursor.. Functionally, RNaseP catalyzes the removal of the 5'-leader sequence from pre-tRNA to produce the mature 5'-terminus. It can also cleave other RNA substrates such as 4.5S RNA. The protein component plays an auxiliary but essential role in vivo by binding to the 5'-leader sequence and broadening the substrate specificity of the ribozyme. The polypeptide is Ribonuclease P protein component (Dictyoglomus turgidum (strain DSM 6724 / Z-1310)).